Reading from the N-terminus, the 306-residue chain is uncharacterized protein (306 aa).

Belongs to the asfivirus CP312R family.

Its subcellular location is the virion. This is an uncharacterized protein from African swine fever virus (isolate Pig/Kenya/KEN-50/1950) (ASFV).